Reading from the N-terminus, the 1126-residue chain is NUT family member 1 (1126 aa).

Disordered stretches follow at residues 1-56, 334-367, 475-515, 537-559, 664-692, 755-810, and 932-1014; these read MASD…PVFS, IPKK…IPPE, EDAQ…QGAA, QEQT…SPSS, AGML…DDRG, ALNS…GPGL, and GEGR…EELS. Positions 30–55 are enriched in pro residues; sequence FAPPPPVPPDQPLWEPSPQPPIPPVF. The segment covering 338–353 has biased composition (basic residues); it reads AASKTRAPRRRQRKPQ. The span at 962-975 shows a compositional bias: polar residues; sequence KLTNGQGQGSTSPR. A Phosphoserine modification is found at Ser-973. Residues 987–1005 are compositionally biased toward basic and acidic residues; sequence TPIKEKCTSADRAKRRETE. Residues Ser-1022, Ser-1025, and Ser-1027 each carry the phosphoserine modification. Residues 1032-1126 form a disordered region; the sequence is PLSTRQASGG…SKRKKRRRSQ (95 aa). Gln-1042 carries the post-translational modification N5-methylglutamine. A compositionally biased stretch (basic residues) spans 1106-1126; sequence PRKRRRDGFVTSKRKKRRRSQ.

This sequence belongs to the NUT family. Methylated at Gln-1042 by N6AMT1. Post-translationally, phosphorylation on Ser-1022, Ser-1025 or Ser-1027 is important for cytoplasmic export.

The protein localises to the cytoplasm. The protein resides in the nucleus. Plays a role in the regulation of proliferation. Regulates TERT expression by modulating SP1 binding to TERT promoter binding sites. This Mus musculus (Mouse) protein is NUT family member 1.